We begin with the raw amino-acid sequence, 607 residues long: Elongation factor 4 (607 aa).

Positions 6-188 constitute a tr-type G domain; it reads DRIRNFSIIA…AIVARIPAPK (183 aa). GTP contacts are provided by residues 18–23 and 135–138; these read DHGKST and NKID.

The protein belongs to the TRAFAC class translation factor GTPase superfamily. Classic translation factor GTPase family. LepA subfamily.

The protein localises to the cell inner membrane. It carries out the reaction GTP + H2O = GDP + phosphate + H(+). In terms of biological role, required for accurate and efficient protein synthesis under certain stress conditions. May act as a fidelity factor of the translation reaction, by catalyzing a one-codon backward translocation of tRNAs on improperly translocated ribosomes. Back-translocation proceeds from a post-translocation (POST) complex to a pre-translocation (PRE) complex, thus giving elongation factor G a second chance to translocate the tRNAs correctly. Binds to ribosomes in a GTP-dependent manner. The chain is Elongation factor 4 from Rhizorhabdus wittichii (strain DSM 6014 / CCUG 31198 / JCM 15750 / NBRC 105917 / EY 4224 / RW1) (Sphingomonas wittichii).